An 895-amino-acid chain; its full sequence is MDGIGDGTESMGFDMPMLMNQQPHLFGSYGHDGSPVAPIFSNPTFQDEPSIGAADDNSDAKRRRIARACDMCRKKKIKCDGKMPKCSHCTNYKTDCVFTQVEKKRNPPKGAKYIEGLENRLGRMESLLRLSGLLSEDDGGKTDLGTLEKRLADRYHASGSNTPHNPQKINIPSQSQIAMSQQNSSSHYSTPRLESQSSPRTAATSPESQKESETEVEGLSDMMCSLVTNNCGETRYIGSSSGFSIFSPKGIQWVNEKTGDNSFQEMISSAYVDDNKWMYWKPEIFSDIFARRVFKPLPPKDEAMSLFKDFFDNFNCMFPLYHEPTFMHLVERQYSRDPYEGSGWWASINVVLAIAHRLRVMSNLVPQEEDRKAWLYLKNAMGVLTELTMRNTDLLSVQALLGMSLFLQGTPNPQPSFFLVAAAIRLSHSIGLHKRGSGFGLNPVEVEQRKRVFWIAYLLDKDICLRSGRPPVQDDDDMNVELPSDDPPDNIGNVPLSDGRSKFNLFRSMCRFATIESKVYKRLYSAKASKQSDGELLNTIGELDKELEDWKDSIPLDFRPEHEIKASHTPLILHVVVLHFAYYNCLTTIHRMSVHHGYWTSRLSNYAIQGLNARPLNPRVFLSAVLCVTAARASINLIKYIPQGDFACVWLILYYPVSALVTLFANILQNPSDARARSDVKLMNVVVNFLSTLVSDESNGSIKRMLGLCGEFERIAKVVLDKAEKESYSKKKRKSPEEPVNLQQSTPEEHPAPSPSTTQPTQAPSRNVPMSSPLFAENPGDPGGNTMADDAGGFASSREIPGTTGVSTNIPPNIQAMPGIAQDYQDMLSPDPLEGVSFADQPPYSATANTPLSSFQQPFVPQDLWQMPMTIEWDWADMSTNFPVFDTNGPPHGGL.

The zn(2)-C6 fungal-type DNA-binding region spans 69 to 96; the sequence is CDMCRKKKIKCDGKMPKCSHCTNYKTDC. Residues 156–218 are disordered; that stretch reads HASGSNTPHN…QKESETEVEG (63 aa). Over residues 158-207 the composition is skewed to polar residues; sequence SGSNTPHNPQKINIPSQSQIAMSQQNSSSHYSTPRLESQSSPRTAATSPE. A helical membrane pass occupies residues 648–668; that stretch reads CVWLILYYPVSALVTLFANIL. Positions 726–813 are disordered; it reads ESYSKKKRKS…TGVSTNIPPN (88 aa). The span at 755–765 shows a compositional bias: low complexity; it reads PSTTQPTQAPS.

In terms of assembly, interacts with ncaA.

The protein localises to the nucleus. It localises to the membrane. Functionally, transcription factor that regulates expression of the genes related to ergosterol biosynthesis, including erg3B, erg24A, erg25A, as well as cyp51A that encodes a target protein of azoles. In coordination with ffmA and ncaA, is responsible for the expression of the ABC transporter abcC/cdr1B/abcG1 related to azole resistance. Directly binds both the cyp51A and abcC/cdr1B/abcG1 promoters at a conserved 34 bp region called the atrR response element (ATRE). AtrR also binds to the promoter regions of both the sterol response transcription factor srbA and atrR genes themselves, the latter suggesting the possibility that atrR is autoregulated. Also regulates iron uptake, most likely via cooperation with SrbA. AtrR is necessary for hypoxia adaptation and virulence. The sequence is that of ABC-transporter-regulating transcription factor from Aspergillus fumigatus (strain ATCC MYA-4609 / CBS 101355 / FGSC A1100 / Af293) (Neosartorya fumigata).